We begin with the raw amino-acid sequence, 368 residues long: uncharacterized protein (368 aa).

This is an uncharacterized protein from Archaeoglobus fulgidus (strain ATCC 49558 / DSM 4304 / JCM 9628 / NBRC 100126 / VC-16).